Consider the following 214-residue polypeptide: Thiamine-phosphate synthase (214 aa).

4-amino-2-methyl-5-(diphosphooxymethyl)pyrimidine contacts are provided by residues 37–41 (QYREK) and asparagine 73. Residues aspartate 74 and aspartate 93 each coordinate Mg(2+). Residue serine 112 coordinates 4-amino-2-methyl-5-(diphosphooxymethyl)pyrimidine. Residue 139–141 (TIS) participates in 2-[(2R,5Z)-2-carboxy-4-methylthiazol-5(2H)-ylidene]ethyl phosphate binding. Lysine 142 contacts 4-amino-2-methyl-5-(diphosphooxymethyl)pyrimidine. Residues glycine 171 and 191–192 (IS) contribute to the 2-[(2R,5Z)-2-carboxy-4-methylthiazol-5(2H)-ylidene]ethyl phosphate site.

The protein belongs to the thiamine-phosphate synthase family. Requires Mg(2+) as cofactor.

The enzyme catalyses 2-[(2R,5Z)-2-carboxy-4-methylthiazol-5(2H)-ylidene]ethyl phosphate + 4-amino-2-methyl-5-(diphosphooxymethyl)pyrimidine + 2 H(+) = thiamine phosphate + CO2 + diphosphate. It catalyses the reaction 2-(2-carboxy-4-methylthiazol-5-yl)ethyl phosphate + 4-amino-2-methyl-5-(diphosphooxymethyl)pyrimidine + 2 H(+) = thiamine phosphate + CO2 + diphosphate. The catalysed reaction is 4-methyl-5-(2-phosphooxyethyl)-thiazole + 4-amino-2-methyl-5-(diphosphooxymethyl)pyrimidine + H(+) = thiamine phosphate + diphosphate. It functions in the pathway cofactor biosynthesis; thiamine diphosphate biosynthesis; thiamine phosphate from 4-amino-2-methyl-5-diphosphomethylpyrimidine and 4-methyl-5-(2-phosphoethyl)-thiazole: step 1/1. Condenses 4-methyl-5-(beta-hydroxyethyl)thiazole monophosphate (THZ-P) and 2-methyl-4-amino-5-hydroxymethyl pyrimidine pyrophosphate (HMP-PP) to form thiamine monophosphate (TMP). This is Thiamine-phosphate synthase from Listeria monocytogenes serotype 4b (strain CLIP80459).